The sequence spans 273 residues: Undecaprenyl-diphosphatase (273 aa).

7 consecutive transmembrane segments (helical) span residues 6–26 (SLLIAAILGVVEGLTEFLPVS), 45–65 (AKTFEVVIQLGSILAVVVMFW), 90–110 (LTLIHILLGMIPAVVLGLLFH), 116–136 (LFNPINVMYALVVGGLLLIAA), 190–210 (YAASEFSFLLAVPMMMGATAL), 222–242 (GDIPMFAVGFITAFVVALIAI), and 252–272 (ISFIPFAIYRFIVAAAVYVVF).

This sequence belongs to the UppP family.

The protein resides in the cell inner membrane. It catalyses the reaction di-trans,octa-cis-undecaprenyl diphosphate + H2O = di-trans,octa-cis-undecaprenyl phosphate + phosphate + H(+). Catalyzes the dephosphorylation of undecaprenyl diphosphate (UPP). Confers resistance to bacitracin. The chain is Undecaprenyl-diphosphatase from Escherichia coli O127:H6 (strain E2348/69 / EPEC).